Here is a 326-residue protein sequence, read N- to C-terminus: Target of rapamycin complex subunit lst8 (326 aa).

WD repeat units follow at residues 1–37, 40–80, 83–122, 126–165, 168–207, 218–257, and 268–309; these read MNSNQGTVGSDPVILATAGYDHTVRFWQAHSGICTRT, HQDS…PVIN, GVSKNITSVGFHEDGRWMYTGGEDCMARIWDLRSRNLQCQ, QVNAPINCVFLHPNQAELIVGDQSGAIHIWDLKTDQNEQL, ETDVSINSVHIDPDASYMAAVNSSGNCFVWNLTGGLGEDL, AHKRCALKCKFSPDSTLLATCSADQTCKIWRTSNFSLMTE, and TSRG…REYS.

Belongs to the WD repeat LST8 family. In terms of assembly, part of the mechanistic target of rapamycin complex 1 (mTORC1) which contains MTOR, MLST8 and RPTOR. Component of the mechanistic target of rapamycin complex 2 (mTORC2), consisting in two heterotretramers composed of MTOR, MLST8, RICTOR and MAPKAP1/SIN1.

The protein resides in the lysosome membrane. The protein localises to the cytoplasm. In terms of biological role, subunit of both mTORC1 and mTORC2, which regulates cell growth and survival in response to nutrient and hormonal signals. mTORC1 is activated in response to growth factors or amino acids. In response to nutrients, mTORC1 is recruited to the lysosome membrane and promotes protein, lipid and nucleotide synthesis by phosphorylating several substrates, such as ribosomal protein S6 kinase (RPS6KB1 and RPS6KB2) and EIF4EBP1 (4E-BP1). In the same time, it inhibits catabolic pathways by phosphorylating the autophagy initiation components ULK1 and ATG13, as well as transcription factor TFEB, a master regulators of lysosomal biogenesis and autophagy. The mTORC1 complex is inhibited in response to starvation and amino acid depletion. Within mTORC1, MLST8 interacts directly with MTOR and enhances its kinase activity. In nutrient-poor conditions, stabilizes the MTOR-RPTOR interaction and favors RPTOR-mediated inhibition of MTOR activity. As part of the mTORC2 complex, transduces signals from growth factors to pathways involved in proliferation, cytoskeletal organization, lipogenesis and anabolic output. mTORC2 is also activated by growth factors, but seems to be nutrient-insensitive. In response to growth factors, mTORC2 phosphorylates and activates AGC protein kinase family members, including AKT (AKT1, AKT2 and AKT3), PKC (PRKCA, PRKCB and PRKCE) and SGK1. mTORC2 functions upstream of Rho GTPases to regulate the actin cytoskeleton, probably by activating one or more Rho-type guanine nucleotide exchange factors. mTORC2 promotes the serum-induced formation of stress-fibers or F-actin. Within mTORC2, MLST8 acts as a bridge between MAPKAP1/SIN1 and MTOR. This Xenopus tropicalis (Western clawed frog) protein is Target of rapamycin complex subunit lst8 (mlst8).